We begin with the raw amino-acid sequence, 201 residues long: Recombination protein RecR (201 aa).

A C4-type zinc finger spans residues 60 to 75; that stretch reads CSVCGNIDTTDPCSIC. Positions 83–178 constitute a Toprim domain; it reads GTIIVVEDIS…KITRLAHGVP (96 aa).

This sequence belongs to the RecR family.

Its function is as follows. May play a role in DNA repair. It seems to be involved in an RecBC-independent recombinational process of DNA repair. It may act with RecF and RecO. The sequence is that of Recombination protein RecR from Bartonella bacilliformis (strain ATCC 35685 / KC583 / Herrer 020/F12,63).